Here is a 35-residue protein sequence, read N- to C-terminus: Bacteriocin SRCAM 1580 (35 aa).

The protein belongs to the bacteriocin class IIA/YGNGV family.

It is found in the secreted. Its function is as follows. Bacteriocin with antibacterial activity against C.jejuni. In Niallia circulans (Bacillus circulans), this protein is Bacteriocin SRCAM 1580.